Reading from the N-terminus, the 382-residue chain is Alpha-2B adrenergic receptor (382 aa).

A helical membrane pass occupies residues 1-25 (AIAAVITFLILFTIFGNALVILAVL). Residues 26-36 (TSRSLRAPQNL) are Cytoplasmic-facing. The chain crosses the membrane as a helical span at residues 37-62 (FLVSLAAADILVATLIIPFSLANELL). Over 63–72 (GYWYFRHTWC) the chain is Extracellular. C72 and C151 are disulfide-bonded. The helical transmembrane segment at 73–95 (EVYLALDVLFCTSSIVHLCAISL) threads the bilayer. Over 96-117 (DRYWSVSRALEYNSKRTPRRIK) the chain is Cytoplasmic. The chain crosses the membrane as a helical span at residues 118–140 (GIILTVWLIAAFISLPPLIYKGD). At 141-156 (KGKKPGGRPQCKLNEE) the chain is on the extracellular side. A helical membrane pass occupies residues 157–180 (AWYILSSSIGSFFAPCLIMILVYL). Topologically, residues 181 to 346 (RIYLIAKRRN…MNREKRFTFV (166 aa)) are cytoplasmic. The tract at residues 192-305 (QGPHGKQAPG…QGTPNFQPSQ (114 aa)) is disordered. Over residues 271–284 (EEEEEEEEEEEEEC) the composition is skewed to acidic residues. Positions 291–305 (TSSSLQGTPNFQPSQ) are enriched in polar residues. Residues 347-370 (LAVVIGVFVLCWFPFFFSYSLGAI) form a helical membrane-spanning segment. At 371-379 (CPQHCKVPH) the chain is on the extracellular side. Residues 380-382 (GLF) traverse the membrane as a helical segment.

It belongs to the G-protein coupled receptor 1 family. Adrenergic receptor subfamily. ADRA2B sub-subfamily. Interacts with RAB26. Interacts with PPP1R9B. Interacts with GGA1, GGA2 and GGA3.

The protein localises to the cell membrane. Alpha-2 adrenergic receptors mediate the catecholamine-induced inhibition of adenylate cyclase through the action of G proteins. This is Alpha-2B adrenergic receptor (ADRA2B) from Didelphis virginiana (North American opossum).